The following is a 475-amino-acid chain: WASH complex subunit 1 (475 aa).

The interval 1 to 54 (MTAVKTQHSLAGQVYAVPLIQPDLRREEAIQQVADALQYLQNISGDIFSRISQR) is required for WASH complex assembly. The tract at residues 1–167 (MTAVKTQHSL…EGLGGLPSNI (167 aa)) is WHD1. A Glycyl lysine isopeptide (Lys-Gly) (interchain with G-Cter in ubiquitin) cross-link involves residue Lys219. Residues 296–475 (EDGALLAPPP…GDEDEDDWES (180 aa)) are disordered. Over residues 302–318 (APPPPPPPPPPPPPPAP) the composition is skewed to pro residues. The interval 357–475 (QGAPKEVVDP…GDEDEDDWES (119 aa)) is VCA. The region spanning 369-391 (GRATLLESIRQAGGIGKAKLRSV) is the WH2 domain. The span at 390–406 (SVKERKLEKKKQKEQEQ) shows a compositional bias: basic and acidic residues. The segment covering 432-446 (SGKGPGTGTSEGPGG) has biased composition (gly residues). Over residues 466-475 (GDEDEDDWES) the composition is skewed to acidic residues.

The protein belongs to the WASH1 family. As to quaternary structure, component of the WASH core complex also described as WASH regulatory complex SHRC composed of WASHC1, WASHC2, WASHC3, WASHC4 and WASHC5. The WASH core complex associates with the F-actin-capping protein dimer (formed by CAPZA1, CAPZA2 or CAPZA3 and CAPZB) in a transient or substoichiometric manner which was initially described as WASH complex. Interacts (via WHD1 region) with WASHC2; the interaction is direct. Interacts with BECN1; WASHC1 and AMBRA1 can competitively interact with BECN1. Interacts with BLOC1S2; may associate with the BLOC-1 complex. Interacts with tubulin gamma chain (TUBG1 or TUBG2). Interacts with TBC1D23. Ubiquitinated at Lys-219 via 'Lys-63'-linked ubiquitin chains by the TRIM27:MAGEL2 E3 ubiquitin ligase complex, leading to promote endosomal F-actin assembly.

The protein resides in the early endosome membrane. It is found in the recycling endosome membrane. In terms of biological role, acts as a component of the WASH core complex that functions as a nucleation-promoting factor (NPF) at the surface of endosomes, where it recruits and activates the Arp2/3 complex to induce actin polymerization, playing a key role in the fission of tubules that serve as transport intermediates during endosome sorting. Regulates the trafficking of endosomal alpha5beta1 integrin to the plasma membrane and involved in invasive cell migration. In T-cells involved in endosome-to-membrane recycling of receptors including T-cell receptor (TCR), CD28 and ITGAL; proposed to be implicated in T-cell proliferation and effector function. In dendritic cells involved in endosome-to-membrane recycling of major histocompatibility complex (MHC) class II probably involving retromer and subsequently allowing antigen sampling, loading and presentation during T-cell activation. Involved in cytokinesis and following polar body extrusion during oocyte meiotic maturation. Involved in Arp2/3 complex-dependent actin assembly driving Salmonella typhimurium invasion independent of ruffling. Involved in the exocytosis of MMP14 leading to matrix remodeling during invasive migration and implicating late endosome-to-plasma membrane tubular connections and cooperation with the exocyst complex. Involved in negative regulation of autophagy independently from its role in endosomal sorting by inhibiting BECN1 ubiquitination to inactivate PIK3C3/Vps34 activity. The chain is WASH complex subunit 1 from Rattus norvegicus (Rat).